A 347-amino-acid chain; its full sequence is Zinc-type alcohol dehydrogenase-like protein C16A3.02c (347 aa).

This sequence belongs to the zinc-containing alcohol dehydrogenase family. Quinone oxidoreductase subfamily.

It is found in the golgi apparatus. The protein localises to the endoplasmic reticulum. The sequence is that of Zinc-type alcohol dehydrogenase-like protein C16A3.02c from Schizosaccharomyces pombe (strain 972 / ATCC 24843) (Fission yeast).